We begin with the raw amino-acid sequence, 423 residues long: Protein phosphatase 2C 77 (423 aa).

The tract at residues 74-95 is disordered; sequence GDEINGSDEFDPRSMNQSEKKV. The PPM-type phosphatase domain maps to 112–411; that stretch reads LYGVTSICGR…DNISVVVVDL (300 aa). Aspartate 165, aspartate 251, and serine 252 together coordinate Mg(2+). A disulfide bond links cysteine 257 and cysteine 331. Mg(2+)-binding residues include aspartate 337 and aspartate 402.

The protein belongs to the PP2C family. Interacts with SPK1, CIPK15/PKS3, GPX3, SCAR1, SCAR2, SCAR3 and SCARL. Also interacts with CIPK24/SOS2. Binds to the fibrillin precursor protein. Interacts with ABA-bounded PYR1, PYL1, PYL2, PYL3, PYL4, PYL5, PYL6, PYL8 and PYL9, and with free PYL2, PYL3 and PYL4. Interacts with and represses GHR1, and, to a lesser extent, SRK2E/OST1. Mg(2+) is required as a cofactor. It depends on Mn(2+) as a cofactor.

It catalyses the reaction O-phospho-L-seryl-[protein] + H2O = L-seryl-[protein] + phosphate. It carries out the reaction O-phospho-L-threonyl-[protein] + H2O = L-threonyl-[protein] + phosphate. Its activity is regulated as follows. Phosphatase activity repressed by oxidized ATGPX3, free fatty acids (e.g. arachidonic acid (20:4) and Linolenic acid (18:3)) and by H(2)O(2). Repressed by PYR/PYL/RCAR ABA receptors in an ABA-dependent manner. In terms of biological role, repressor of the abscisic acid (ABA) signaling pathway that regulates numerous ABA responses, such as stomatal closure, osmotic water permeability of the plasma membrane (Pos), high light stress, response to glucose, seed germination and inhibition of vegetative growth. During the stomatal closure regulation, modulates the inward calcium-channel permeability as well as H(2)O(2) and oxidative burst in response to ABA and dehydration. Represses GHR1 and, to some extent, SRK2E/OST1, kinases involved in the regulation of SLAC1-dependent stomatal closure. Controls negatively fibrillin that is involved in mediating ABA-induced photoprotection. May be implicated in ABA content regulation. Involved in acquired thermotolerance of root growth and seedling survival. Required for the Erwinia amylovora harpin-induced (HrpN) drought tolerance. Involved in the hydrotropic response. The protein is Protein phosphatase 2C 77 of Arabidopsis thaliana (Mouse-ear cress).